The chain runs to 81 residues: uncharacterized protein (81 aa).

This sequence belongs to the ycf70 family.

It is found in the plastid. Its subcellular location is the chloroplast. This is an uncharacterized protein from Saccharum officinarum (Sugarcane).